Here is a 526-residue protein sequence, read N- to C-terminus: ATP synthase subunit alpha (526 aa).

Position 171 to 178 (171 to 178 (GDRQTGKT)) interacts with ATP.

Belongs to the ATPase alpha/beta chains family. As to quaternary structure, F-type ATPases have 2 components, CF(1) - the catalytic core - and CF(0) - the membrane proton channel. CF(1) has five subunits: alpha(3), beta(3), gamma(1), delta(1), epsilon(1). CF(0) has three main subunits: a(1), b(2) and c(9-12). The alpha and beta chains form an alternating ring which encloses part of the gamma chain. CF(1) is attached to CF(0) by a central stalk formed by the gamma and epsilon chains, while a peripheral stalk is formed by the delta and b chains.

It localises to the cell membrane. It catalyses the reaction ATP + H2O + 4 H(+)(in) = ADP + phosphate + 5 H(+)(out). Produces ATP from ADP in the presence of a proton gradient across the membrane. The alpha chain is a regulatory subunit. The protein is ATP synthase subunit alpha of Christiangramia forsetii (strain DSM 17595 / CGMCC 1.15422 / KT0803) (Gramella forsetii).